We begin with the raw amino-acid sequence, 44 residues long: Entericidin A (44 aa).

Positions 1-21 (MMKRLLGLVMLLLFTCTLLTG) are cleaved as a signal peptide. Cysteine 22 carries the N-palmitoyl cysteine lipid modification. Cysteine 22 carries the S-diacylglycerol cysteine lipid modification.

The protein belongs to the EcnA/EcnB lipoprotein family.

It is found in the cell membrane. Functionally, acts as antidote to the effect of entericidin B. The polypeptide is Entericidin A (ecnA) (Citrobacter freundii).